The following is a 161-amino-acid chain: Insulin-like growth factor 1, juvenile form (161 aa).

Positions 45-73 (GPETLCGAELVDTLQFVCGDRGFYFSKPT) are b. 3 disulfide bridges follow: Cys50–Cys92, Cys62–Cys105, and Cys91–Cys96. The interval 74-85 (GYGPSSRRSHNR) is c. An a region spans residues 86 to 106 (GIVDECCFQSCELRRLEMYCA). Residues 107 to 114 (PVKPGKTP) are d. Positions 111-161 (GKTPRSVRAQRHTDSPRTAKKPLPGQSHSSYKEVHQKNSSRGNTGGRNYRI) are disordered. Positions 115 to 161 (RSVRAQRHTDSPRTAKKPLPGQSHSSYKEVHQKNSSRGNTGGRNYRI) are cleaved as a propeptide — e peptide.

Belongs to the insulin family.

Its subcellular location is the secreted. In terms of biological role, the insulin-like growth factors, isolated from plasma, are structurally and functionally related to insulin but have a much higher growth-promoting activity. Acts as a ligand for IGF1R. Binds to the alpha subunit of IGF1R, leading to the activation of the intrinsic tyrosine kinase activity which autophosphorylates tyrosine residues in the beta subunit thus initiatiating a cascade of down-stream signaling events leading to activation of the PI3K-AKT/PKB and the Ras-MAPK pathways. Binds to integrins. Its binding to integrins and subsequent ternary complex formation with integrins and IGFR1 are essential for IGF1 signaling. This is Insulin-like growth factor 1, juvenile form from Cyprinus carpio (Common carp).